The sequence spans 202 residues: S-modulin (202 aa).

Residue G2 is the site of N-myristoyl glycine attachment. 4 EF-hand domains span residues 25 to 60 (QEEL…FPDA), 61 to 96 (DPKA…TSSG), 97 to 132 (KANQ…IFKM), and 147 to 182 (TPEK…NKEI). D74, N76, D78, T80, E85, D110, D112, N114, T116, and E121 together coordinate Ca(2+).

Belongs to the recoverin family. Post-translationally, the N-terminus is blocked.

Its function is as follows. Calcium-dependent regulator of light sensitivity of cGMP phosphodiesterase in rod outer segments. Controls rhodopsin phosphorylation in a Ca(2+)-dependent manner. The polypeptide is S-modulin (Aquarana catesbeiana (American bullfrog)).